We begin with the raw amino-acid sequence, 140 residues long: FAD synthase (140 aa).

Residues 10-11 (TF), 15-18 (HPGH), and N93 contribute to the ATP site.

The protein belongs to the archaeal FAD synthase family. Homodimer. A divalent metal cation serves as cofactor.

The enzyme catalyses FMN + ATP + H(+) = FAD + diphosphate. Its pathway is cofactor biosynthesis; FAD biosynthesis; FAD from FMN: step 1/1. Its function is as follows. Catalyzes the transfer of the AMP portion of ATP to flavin mononucleotide (FMN) to produce flavin adenine dinucleotide (FAD) coenzyme. The sequence is that of FAD synthase from Methanocella arvoryzae (strain DSM 22066 / NBRC 105507 / MRE50).